A 73-amino-acid polypeptide reads, in one-letter code: Crustacean hyperglycemic hormone (73 aa).

Intrachain disulfides connect C7-C43, C23-C39, and C26-C52. Residue V73 is modified to Valine amide.

The protein belongs to the arthropod CHH/MIH/GIH/VIH hormone family. Produced by the medulla terminalis X-organ in the eyestalks and transported to the sinus gland where they are stored and released.

The protein resides in the secreted. Its function is as follows. Hormone found in the sinus gland of isopods and decapods which controls the blood sugar level. Has a secretagogue action over the amylase released from the midgut gland. May act as a stress hormone and may be involved in the control of molting and reproduction. The polypeptide is Crustacean hyperglycemic hormone (Jasus lalandii (Cape rock lobster)).